Here is a 179-residue protein sequence, read N- to C-terminus: Large ribosomal subunit protein uL5 (179 aa).

Belongs to the universal ribosomal protein uL5 family. As to quaternary structure, part of the 50S ribosomal subunit; part of the 5S rRNA/L5/L18/L25 subcomplex. Contacts the 5S rRNA and the P site tRNA. Forms a bridge to the 30S subunit in the 70S ribosome.

Its function is as follows. This is one of the proteins that bind and probably mediate the attachment of the 5S RNA into the large ribosomal subunit, where it forms part of the central protuberance. In the 70S ribosome it contacts protein S13 of the 30S subunit (bridge B1b), connecting the 2 subunits; this bridge is implicated in subunit movement. Contacts the P site tRNA; the 5S rRNA and some of its associated proteins might help stabilize positioning of ribosome-bound tRNAs. This is Large ribosomal subunit protein uL5 from Proteus mirabilis (strain HI4320).